The primary structure comprises 213 residues: ATP phosphoribosyltransferase (213 aa).

The protein belongs to the ATP phosphoribosyltransferase family. Short subfamily. In terms of assembly, heteromultimer composed of HisG and HisZ subunits.

Its subcellular location is the cytoplasm. The enzyme catalyses 1-(5-phospho-beta-D-ribosyl)-ATP + diphosphate = 5-phospho-alpha-D-ribose 1-diphosphate + ATP. Its pathway is amino-acid biosynthesis; L-histidine biosynthesis; L-histidine from 5-phospho-alpha-D-ribose 1-diphosphate: step 1/9. Its function is as follows. Catalyzes the condensation of ATP and 5-phosphoribose 1-diphosphate to form N'-(5'-phosphoribosyl)-ATP (PR-ATP). Has a crucial role in the pathway because the rate of histidine biosynthesis seems to be controlled primarily by regulation of HisG enzymatic activity. In Listeria monocytogenes serotype 4b (strain F2365), this protein is ATP phosphoribosyltransferase.